The primary structure comprises 203 residues: Nascent polypeptide-associated complex subunit alpha-like protein 1 (203 aa).

Residues 1-23 (MTTEEKEILAAKLEEQKIDLDKP) show a composition bias toward basic and acidic residues. The disordered stretch occupies residues 1 to 71 (MTTEEKEILA…SEKKSRKAML (71 aa)). Acidic residues predominate over residues 24 to 50 (EVEDDDDNEDDDSDDDDKDDDEADGLD). Position 36 is a phosphoserine (S36). The NAC-A/B domain occupies 60-125 (SRSEKKSRKA…AKIEDLSSQI (66 aa)). In terms of domain architecture, UBA spans 158 to 203 (EVDEEGVEPKDIELVMTQAGVSRPNAVKALKAADGDIVSAIMELTT).

Belongs to the NAC-alpha family.

Functionally, may promote appropriate targeting of ribosome-nascent polypeptide complexes. The chain is Nascent polypeptide-associated complex subunit alpha-like protein 1 from Arabidopsis thaliana (Mouse-ear cress).